The sequence spans 368 residues: 2-aminoethylphosphonate--pyruvate transaminase (368 aa).

Position 192 is an N6-(pyridoxal phosphate)lysine (lysine 192).

Belongs to the class-V pyridoxal-phosphate-dependent aminotransferase family. PhnW subfamily. Homodimer. The cofactor is pyridoxal 5'-phosphate.

It catalyses the reaction (2-aminoethyl)phosphonate + pyruvate = phosphonoacetaldehyde + L-alanine. Its function is as follows. Involved in phosphonate degradation. In Pseudomonas putida (strain GB-1), this protein is 2-aminoethylphosphonate--pyruvate transaminase.